The primary structure comprises 743 residues: DEAD-box ATP-dependent RNA helicase 3B, chloroplastic (743 aa).

The N-terminal 37 residues, M1–A37, are a transit peptide targeting the chloroplast. The interval G60–E79 is disordered. The span at S61–E79 shows a compositional bias: acidic residues. Residues L88–R116 carry the Q motif motif. Positions L119–I295 constitute a Helicase ATP-binding domain. Residue A132–T139 participates in ATP binding. The DEAD box signature appears at D243–D246. One can recognise a Helicase C-terminal domain in the interval V324–L469. The tract at residues L606–S719 is disordered. Positions G642–D653 are enriched in gly residues. Basic and acidic residues predominate over residues E657–N671. Residues R688 to S719 show a composition bias toward low complexity. A CCHC-type zinc finger spans residues G725–N742.

It belongs to the DEAD box helicase family. DDX21/DDX50 subfamily.

Its subcellular location is the plastid. The protein resides in the chloroplast stroma. The enzyme catalyses ATP + H2O = ADP + phosphate + H(+). In terms of biological role, nuclear genome-encoded factor involved in ribosome biogenesis in chloroplasts. Binds specific group II introns in chloroplasts and facilitates their splicing. Is required for rRNA maturation in plastids and may contribute to the assembly of the large (50S) ribosomal subunit. Required for normal development of chloroplasts. The sequence is that of DEAD-box ATP-dependent RNA helicase 3B, chloroplastic from Zea mays (Maize).